The following is a 278-amino-acid chain: NADPH-dependent 7-cyano-7-deazaguanine reductase (278 aa).

87–89 is a substrate binding site; that stretch reads IES. Residue 89–90 coordinates NADPH; it reads SK. Residue cysteine 185 is the Thioimide intermediate of the active site. Residue aspartate 192 is the Proton donor of the active site. 224–225 is a binding site for substrate; sequence HE. 253–254 provides a ligand contact to NADPH; that stretch reads RG. A disordered region spans residues 255–278; sequence GLDINPYRSTNPTFSVQNHRSFRQ. A compositionally biased stretch (polar residues) spans 261–278; it reads YRSTNPTFSVQNHRSFRQ.

The protein belongs to the GTP cyclohydrolase I family. QueF type 2 subfamily. In terms of assembly, homodimer.

Its subcellular location is the cytoplasm. The enzyme catalyses 7-aminomethyl-7-carbaguanine + 2 NADP(+) = 7-cyano-7-deazaguanine + 2 NADPH + 3 H(+). It participates in tRNA modification; tRNA-queuosine biosynthesis. Catalyzes the NADPH-dependent reduction of 7-cyano-7-deazaguanine (preQ0) to 7-aminomethyl-7-deazaguanine (preQ1). In Coxiella burnetii (strain Dugway 5J108-111), this protein is NADPH-dependent 7-cyano-7-deazaguanine reductase.